A 131-amino-acid polypeptide reads, in one-letter code: Small ribosomal subunit protein uS8 (131 aa).

The protein belongs to the universal ribosomal protein uS8 family. As to quaternary structure, part of the 30S ribosomal subunit. Contacts proteins S5 and S12.

Functionally, one of the primary rRNA binding proteins, it binds directly to 16S rRNA central domain where it helps coordinate assembly of the platform of the 30S subunit. The polypeptide is Small ribosomal subunit protein uS8 (Paraburkholderia phymatum (strain DSM 17167 / CIP 108236 / LMG 21445 / STM815) (Burkholderia phymatum)).